A 302-amino-acid chain; its full sequence is Protein transport protein SEC13 homolog A (302 aa).

WD repeat units follow at residues 9–48 (GHSD…GSQH), 54–95 (GHRG…QWTQ), 101–142 (DHKV…GWDT), 148–201 (AHPV…WKMD), 208–251 (KHTD…EQWE), and 257–296 (DFKT…EWEQ).

It belongs to the WD repeat SEC13 family. Interacts with MAG5, SEC31A and SEC31B.

The protein localises to the golgi apparatus. It is found in the endoplasmic reticulum. Its function is as follows. Required for protein transport from the endoplasmic reticulum to the Golgi apparatus. The sequence is that of Protein transport protein SEC13 homolog A from Arabidopsis thaliana (Mouse-ear cress).